A 439-amino-acid polypeptide reads, in one-letter code: UDP-N-acetylglucosamine--peptide N-acetylglucosaminyltransferase stabilizing protein GtfB (439 aa).

Belongs to the GtfB family. In terms of assembly, interacts with glycosyltransferase GtfA (Gtf2); probably forms a heterotetramer with 2 subunits each of GtfA and GtfB. Part of the accessory SecA2/SecY2 protein translocation apparatus.

It is found in the cell membrane. Its pathway is protein modification; protein glycosylation. Its function is as follows. Required for the polymorphic O-glycosylation of the serine-rich repeat protein Fap1. A stabilizing protein that is part of the accessory SecA2/SecY2 system specifically required to export Fap1, a serine-rich fimbrial adhesin encoded upstream in the same operon. The GtfA-GtfB (Gtf1-Gtf2 in this bacteria) complex adds GlcNAc from UDP-GlcNAc to Fap1, attaching the first sugar residue. Cannot use not UDP-Glc as substrate. Stabilizes the glycosylation activity of GtfA, causing it to partially localize to the cellular membrane where it is more protease resistant. This Streptococcus parasanguinis protein is UDP-N-acetylglucosamine--peptide N-acetylglucosaminyltransferase stabilizing protein GtfB.